The chain runs to 339 residues: 2-deoxy-scyllo-inosamine dehydrogenase (339 aa).

Residues cysteine 37, histidine 59, cysteine 88, cysteine 91, cysteine 94, cysteine 102, and glutamate 143 each coordinate Zn(2+).

It belongs to the zinc-containing alcohol dehydrogenase family. DOIA dehydrogenase subfamily. Zn(2+) is required as a cofactor.

It carries out the reaction 2-deoxy-scyllo-inosamine + NADP(+) = 3-amino-2,3-dideoxy-scyllo-inosose + NADPH + H(+). The enzyme catalyses 2-deoxy-scyllo-inosamine + NAD(+) = 3-amino-2,3-dideoxy-scyllo-inosose + NADH + H(+). It participates in metabolic intermediate biosynthesis; 2-deoxystreptamine biosynthesis; 2-deoxystreptamine from D-glucose 6-phosphate: step 3/4. It functions in the pathway antibiotic biosynthesis; paromomycin biosynthesis. In terms of biological role, catalyzes the oxidation of 2-deoxy-scyllo-inosamine (DOIA) with NAD(+) or NADP(+), forming 3-amino-2,3-dideoxy-scyllo-inosose (amino-DOI). This chain is 2-deoxy-scyllo-inosamine dehydrogenase (parE), found in Streptomyces paromomycinus (Streptomyces rimosus subsp. paromomycinus).